The sequence spans 1039 residues: MNNGKVRIYELSKELNLDNKELLAICDQLNIAVKSHSSTISESEAESIRAAAEKLAATNGTSKKELNATSHKPNSAPAGSRNRPAPPQKQQQILEIRKPKILRNTTSNAPEASVANNQIASSEANSPAPPRPFATPVSPMKPTAPSRPVPRNLSETPQKPAAPEAEPEAQSQAPAKIAVEKPEKSAQPRPGKPERQPKPQLVAPPSRPTAEKLDLSEITGAPGEKPILKRDRPRREDERDQAKPRVAKPAQGETSSAPVQKQARPAQGLVKPEQRVNRPGAPSGDGIRPQRPVRPSADAAPVATPPRGVPGGGRGEAGDTAAIAPDLLDLKRPTPPRLAKGGKKWQEEEIIDEIKEKAGKAGVKGKRVKPLVEDDFEDEDLLDEEGLEIPATVQVSLSIARPPKPKAARSASAATAAPISSPTTRGKRSSHNNRDQNRRQETEVKRERPEKVAVTGAMTVQELADLMAVADTEIVKILFMKGMAVSITQNLDIPTITLVGKELEIEVETAEPEAEARKVTEMIEVGDLEHLLRRPPVVTIMGHVDHGKTTLLDSIRKTKVAAGEAGGITQHIGAYHVDIVHDGKEQQIVFLDTPGHEAFTAMRARGARVTDIAVLVVAADDGVRPQTVEAISHAQAAGVPIVVAINKIDKEGAQPDRVKQELTQYGLTSEEWGGETIMVPVSAIRGENLDTLLEMILLVAEVGELSANPDRNARGTVIEAHLDKAKGAVATLLIQNGTLHVGDILLAGSAFGKVRAMVDDRGRRVDIAGPSFAVEVLGLSDVPAAGDEFEVFDNEKEARALASDRADKQRLSRLLQGRVTLTTLSAQAQEGELKELNLILKGDVQGSVEAIVGSLKQIPQNEVQIRMLLTAAGEITETDIDLAAASGAVIIGFNTTFASGARQAADEAGVDVREYNIIYKLIEDIQGALEGLLEPELVEEPLGQTEVRAVFPVGRGAVAGCYVQSGKLVRNCKVRVRRAGKVIYEGVLDSLKRMKDDAREVNAGYECGIGVDKFHDWAEGDIIESYQMVTKRRTLALTR.

Disordered stretches follow at residues 39–347 and 400–452; these read TISE…KWQE and ARPP…PEKV. Polar residues predominate over residues 103-125; that stretch reads RNTTSNAPEASVANNQIASSEAN. Low complexity predominate over residues 157–176; sequence PQKPAAPEAEPEAQSQAPAK. Basic and acidic residues-rich tracts occupy residues 178 to 197 and 226 to 243; these read AVEK…ERQP and PILK…DQAK. Over residues 408–423 the composition is skewed to low complexity; that stretch reads ARSASAATAAPISSPT. Over residues 432–451 the composition is skewed to basic and acidic residues; it reads NNRDQNRRQETEVKRERPEK. The tr-type G domain occupies 533–706; that stretch reads RRPPVVTIMG…LLVAEVGELS (174 aa). The tract at residues 542–549 is G1; it reads GHVDHGKT. 542 to 549 is a binding site for GTP; it reads GHVDHGKT. The tract at residues 567 to 571 is G2; the sequence is GITQH. Positions 592 to 595 are G3; that stretch reads DTPG. GTP-binding positions include 592-596 and 646-649; these read DTPGH and NKID. Positions 646-649 are G4; sequence NKID. The interval 682 to 684 is G5; the sequence is SAI.

This sequence belongs to the TRAFAC class translation factor GTPase superfamily. Classic translation factor GTPase family. IF-2 subfamily.

It is found in the cytoplasm. One of the essential components for the initiation of protein synthesis. Protects formylmethionyl-tRNA from spontaneous hydrolysis and promotes its binding to the 30S ribosomal subunits. Also involved in the hydrolysis of GTP during the formation of the 70S ribosomal complex. The chain is Translation initiation factor IF-2 from Nostoc sp. (strain PCC 7120 / SAG 25.82 / UTEX 2576).